Consider the following 112-residue polypeptide: Small ribosomal subunit protein bS6 (112 aa).

The protein belongs to the bacterial ribosomal protein bS6 family.

Functionally, binds together with bS18 to 16S ribosomal RNA. This Chlamydia abortus (strain DSM 27085 / S26/3) (Chlamydophila abortus) protein is Small ribosomal subunit protein bS6.